Here is a 237-residue protein sequence, read N- to C-terminus: Undecaprenyl-diphosphatase (237 aa).

The next 7 membrane-spanning stretches (helical) occupy residues 38–58, 65–85, 92–112, 126–146, 166–186, 191–211, and 217–237; these read QTAVLHLGTLVSVVLFALDGI, WRIILNLIVSTIPAGVFGVLF, LFSSPRFLPLFFSATALILMF, MSFLDALLVGIAQLFALFPGI, ALQYSFLMSIPVVLGAGILGL, VTILAPIFAFLSGLFALYVLS, and GKIWQFSYYCLFVAILSYLAG.

Belongs to the UppP family.

The protein resides in the cell inner membrane. The catalysed reaction is di-trans,octa-cis-undecaprenyl diphosphate + H2O = di-trans,octa-cis-undecaprenyl phosphate + phosphate + H(+). Its function is as follows. Catalyzes the dephosphorylation of undecaprenyl diphosphate (UPP). Confers resistance to bacitracin. This is Undecaprenyl-diphosphatase from Thermotoga maritima (strain ATCC 43589 / DSM 3109 / JCM 10099 / NBRC 100826 / MSB8).